The sequence spans 411 residues: ATP-dependent Clp protease ATP-binding subunit ClpX (411 aa).

In terms of domain architecture, ClpX-type ZB spans 1–49 (MSDRDIRCSFCGRTQKEVKKLIAGPGVYICDECVKLAYDIIEEDEEEDV). Zn(2+) contacts are provided by cysteine 8, cysteine 11, cysteine 30, and cysteine 33. 115–122 (PTGVGKTL) is an ATP binding site.

Belongs to the ClpX chaperone family. In terms of assembly, component of the ClpX-ClpP complex. Forms a hexameric ring that, in the presence of ATP, binds to fourteen ClpP subunits assembled into a disk-like structure with a central cavity, resembling the structure of eukaryotic proteasomes.

Functionally, ATP-dependent specificity component of the Clp protease. It directs the protease to specific substrates. Can perform chaperone functions in the absence of ClpP. This Dictyoglomus thermophilum (strain ATCC 35947 / DSM 3960 / H-6-12) protein is ATP-dependent Clp protease ATP-binding subunit ClpX.